Here is a 319-residue protein sequence, read N- to C-terminus: Acetyl-coenzyme A carboxylase carboxyl transferase subunit alpha (319 aa).

Positions 35 to 296 (NLDEEVQRLR…KAQLLDDLSE (262 aa)) constitute a CoA carboxyltransferase C-terminal domain.

Belongs to the AccA family. In terms of assembly, acetyl-CoA carboxylase is a heterohexamer composed of biotin carboxyl carrier protein (AccB), biotin carboxylase (AccC) and two subunits each of ACCase subunit alpha (AccA) and ACCase subunit beta (AccD).

It localises to the cytoplasm. The catalysed reaction is N(6)-carboxybiotinyl-L-lysyl-[protein] + acetyl-CoA = N(6)-biotinyl-L-lysyl-[protein] + malonyl-CoA. The protein operates within lipid metabolism; malonyl-CoA biosynthesis; malonyl-CoA from acetyl-CoA: step 1/1. Its function is as follows. Component of the acetyl coenzyme A carboxylase (ACC) complex. First, biotin carboxylase catalyzes the carboxylation of biotin on its carrier protein (BCCP) and then the CO(2) group is transferred by the carboxyltransferase to acetyl-CoA to form malonyl-CoA. This is Acetyl-coenzyme A carboxylase carboxyl transferase subunit alpha from Sodalis glossinidius (strain morsitans).